Here is a 213-residue protein sequence, read N- to C-terminus: Na(+)-translocating NADH-quinone reductase subunit D (213 aa).

7 helical membrane-spanning segments follow: residues 21–41 (PLIA…VNTA), 42–62 (LTMG…VSLL), 77–97 (IIIS…FFDI), 101–121 (LSVF…AESL), 131–151 (FLDG…VSII), 153–173 (EFFG…FYAS), and 183–203 (FGLM…IWGV).

Belongs to the NqrDE/RnfAE family. Composed of six subunits; NqrA, NqrB, NqrC, NqrD, NqrE and NqrF.

The protein resides in the cell inner membrane. It catalyses the reaction a ubiquinone + n Na(+)(in) + NADH + H(+) = a ubiquinol + n Na(+)(out) + NAD(+). Functionally, NQR complex catalyzes the reduction of ubiquinone-1 to ubiquinol by two successive reactions, coupled with the transport of Na(+) ions from the cytoplasm to the periplasm. NqrA to NqrE are probably involved in the second step, the conversion of ubisemiquinone to ubiquinol. The chain is Na(+)-translocating NADH-quinone reductase subunit D from Chlamydia abortus (strain DSM 27085 / S26/3) (Chlamydophila abortus).